We begin with the raw amino-acid sequence, 360 residues long: Phospho-N-acetylmuramoyl-pentapeptide-transferase (360 aa).

Transmembrane regions (helical) follow at residues 25 to 45 (RGILGVLTALILALCLGPWMI), 73 to 93 (TMGGALILSAIAISTLLWADL), 97 to 117 (YVWTVLAVTLLFGAIGWVDDY), 132 to 152 (WKYFWQSVFGLGAALFLYMTA), 167 to 187 (TIEIPLGAAFIVLTYFVIVGS), 199 to 219 (GLAIMPTVMVGGALGIFCYLS), 236 to 256 (AGELIVFCGALIGAGLGFLWF), 263 to 283 (VFMGDVGALALGAALGTIAVI), 288 to 308 (VVLFIMGGVFVMETLSVMIQV), and 338 to 358 (VIVRFWIITVVLVLIGLATLK).

Belongs to the glycosyltransferase 4 family. MraY subfamily. Mg(2+) is required as a cofactor.

The protein resides in the cell inner membrane. The catalysed reaction is UDP-N-acetyl-alpha-D-muramoyl-L-alanyl-gamma-D-glutamyl-meso-2,6-diaminopimeloyl-D-alanyl-D-alanine + di-trans,octa-cis-undecaprenyl phosphate = di-trans,octa-cis-undecaprenyl diphospho-N-acetyl-alpha-D-muramoyl-L-alanyl-D-glutamyl-meso-2,6-diaminopimeloyl-D-alanyl-D-alanine + UMP. It participates in cell wall biogenesis; peptidoglycan biosynthesis. In terms of biological role, catalyzes the initial step of the lipid cycle reactions in the biosynthesis of the cell wall peptidoglycan: transfers peptidoglycan precursor phospho-MurNAc-pentapeptide from UDP-MurNAc-pentapeptide onto the lipid carrier undecaprenyl phosphate, yielding undecaprenyl-pyrophosphoryl-MurNAc-pentapeptide, known as lipid I. This Azotobacter vinelandii (strain DJ / ATCC BAA-1303) protein is Phospho-N-acetylmuramoyl-pentapeptide-transferase.